Consider the following 181-residue polypeptide: 6,7-dimethyl-8-ribityllumazine synthase 2 (181 aa).

Residues 1–23 (MSLPMTETVTDPAETAPPTAERS) form a disordered region. 5-amino-6-(D-ribitylamino)uracil contacts are provided by residues Trp-40, 74–76 (SFE), 98–100 (LVV), and Ser-129.

Belongs to the DMRL synthase family.

It catalyses the reaction (2S)-2-hydroxy-3-oxobutyl phosphate + 5-amino-6-(D-ribitylamino)uracil = 6,7-dimethyl-8-(1-D-ribityl)lumazine + phosphate + 2 H2O + H(+). It functions in the pathway cofactor biosynthesis; riboflavin biosynthesis; riboflavin from 2-hydroxy-3-oxobutyl phosphate and 5-amino-6-(D-ribitylamino)uracil: step 1/2. Its function is as follows. Catalyzes the formation of 6,7-dimethyl-8-ribityllumazine by condensation of 5-amino-6-(D-ribitylamino)uracil with 3,4-dihydroxy-2-butanone 4-phosphate. This is the penultimate step in the biosynthesis of riboflavin. This Rhodopseudomonas palustris (strain ATCC BAA-98 / CGA009) protein is 6,7-dimethyl-8-ribityllumazine synthase 2.